The following is a 267-amino-acid chain: Glucosamine-6-phosphate deaminase (267 aa).

Residue Asp-72 is the Proton acceptor; for enolization step of the active site. Asp-141 serves as the catalytic For ring-opening step. His-143 acts as the Proton acceptor; for ring-opening step in catalysis. Glu-148 serves as the catalytic For ring-opening step.

This sequence belongs to the glucosamine/galactosamine-6-phosphate isomerase family. NagB subfamily. Homohexamer.

The catalysed reaction is alpha-D-glucosamine 6-phosphate + H2O = beta-D-fructose 6-phosphate + NH4(+). The protein operates within amino-sugar metabolism; N-acetylneuraminate degradation; D-fructose 6-phosphate from N-acetylneuraminate: step 5/5. Its activity is regulated as follows. Allosterically activated by N-acetylglucosamine 6-phosphate (GlcNAc6P). Catalyzes the reversible isomerization-deamination of glucosamine 6-phosphate (GlcN6P) to form fructose 6-phosphate (Fru6P) and ammonium ion. The chain is Glucosamine-6-phosphate deaminase from Mannheimia succiniciproducens (strain KCTC 0769BP / MBEL55E).